The following is a 226-amino-acid chain: MFLLNASRLGAGSRLFSSAGVQFAKKRGQAAKEAVEVDLVDVGDYVKKATERFQHTVELHKKRLGQMKAGKPDATMFDGLAVGNEKQKFTELAATSVKGKNMLIVTVFDPKDTKRVASAIVGAGLNVTTERVLENQQQLKISLPPVTTETRERLCRDMKKVFEEYKNSANRHSLGHVRSEVLKELKKLDKKNDSVRKVIQEIENLHKEYTAMLQEQLKHAEKNAMR.

The protein belongs to the RRF family.

It localises to the mitochondrion. Functionally, necessary for protein synthesis in mitochondria. Functions as a ribosome recycling factor in mitochondria. In Eremothecium gossypii (strain ATCC 10895 / CBS 109.51 / FGSC 9923 / NRRL Y-1056) (Yeast), this protein is Ribosome-recycling factor, mitochondrial (RRF1).